Reading from the N-terminus, the 109-residue chain is UPF0122 protein CLH_1195 (109 aa).

Belongs to the UPF0122 family.

Functionally, might take part in the signal recognition particle (SRP) pathway. This is inferred from the conservation of its genetic proximity to ftsY/ffh. May be a regulatory protein. This Clostridium botulinum (strain Alaska E43 / Type E3) protein is UPF0122 protein CLH_1195.